We begin with the raw amino-acid sequence, 811 residues long: DNA gyrase subunit A (811 aa).

Residues 30–493 enclose the Topo IIA-type catalytic domain; it reads LPDVRDGLKP…LEEDIGKEDL (464 aa). Catalysis depends on Tyr118, which acts as the O-(5'-phospho-DNA)-tyrosine intermediate. The GyrA-box motif lies at 520–526; the sequence is QGRGGRG.

The protein belongs to the type II topoisomerase GyrA/ParC subunit family. In terms of assembly, heterotetramer, composed of two GyrA and two GyrB chains. In the heterotetramer, GyrA contains the active site tyrosine that forms a transient covalent intermediate with DNA, while GyrB binds cofactors and catalyzes ATP hydrolysis.

The protein resides in the cytoplasm. The enzyme catalyses ATP-dependent breakage, passage and rejoining of double-stranded DNA.. A type II topoisomerase that negatively supercoils closed circular double-stranded (ds) DNA in an ATP-dependent manner to modulate DNA topology and maintain chromosomes in an underwound state. Negative supercoiling favors strand separation, and DNA replication, transcription, recombination and repair, all of which involve strand separation. Also able to catalyze the interconversion of other topological isomers of dsDNA rings, including catenanes and knotted rings. Type II topoisomerases break and join 2 DNA strands simultaneously in an ATP-dependent manner. This is DNA gyrase subunit A from Deinococcus deserti (strain DSM 17065 / CIP 109153 / LMG 22923 / VCD115).